We begin with the raw amino-acid sequence, 502 residues long: Type II methyltransferase M.HincII (502 aa).

This sequence belongs to the N(4)/N(6)-methyltransferase family.

It catalyses the reaction a 2'-deoxyadenosine in DNA + S-adenosyl-L-methionine = an N(6)-methyl-2'-deoxyadenosine in DNA + S-adenosyl-L-homocysteine + H(+). Functionally, a gamma subtype methylase that recognizes the double-stranded sequence 5'-GTYRAC-3', methylates A-5 on both strands, and protects the DNA from cleavage by the HincII endonuclease. This is Type II methyltransferase M.HincII from Haemophilus influenzae.